The primary structure comprises 57 residues: UPF0509 protein YciZ (57 aa).

Belongs to the UPF0509 family.

The protein is UPF0509 protein YciZ of Escherichia coli O127:H6 (strain E2348/69 / EPEC).